The chain runs to 230 residues: 2-C-methyl-D-erythritol 4-phosphate cytidylyltransferase (230 aa).

It belongs to the IspD/TarI cytidylyltransferase family. IspD subfamily.

It catalyses the reaction 2-C-methyl-D-erythritol 4-phosphate + CTP + H(+) = 4-CDP-2-C-methyl-D-erythritol + diphosphate. It participates in isoprenoid biosynthesis; isopentenyl diphosphate biosynthesis via DXP pathway; isopentenyl diphosphate from 1-deoxy-D-xylulose 5-phosphate: step 2/6. In terms of biological role, catalyzes the formation of 4-diphosphocytidyl-2-C-methyl-D-erythritol from CTP and 2-C-methyl-D-erythritol 4-phosphate (MEP). This is 2-C-methyl-D-erythritol 4-phosphate cytidylyltransferase from Shewanella halifaxensis (strain HAW-EB4).